A 182-amino-acid chain; its full sequence is UPF0397 protein BCQ_2505 (182 aa).

5 helical membrane-spanning segments follow: residues 9–29 (VVAI…GFSI), 40–60 (AILT…IGLI), 71–91 (WGIW…MGFI), 114–134 (ITGL…DIIV), and 142–162 (IVIQ…VLGL).

Belongs to the UPF0397 family.

It localises to the cell membrane. This is UPF0397 protein BCQ_2505 from Bacillus cereus (strain Q1).